We begin with the raw amino-acid sequence, 213 residues long: Small ribosomal subunit protein uS4 (213 aa).

The disordered stretch occupies residues 16–53 (GTDLGLKSGVKPYDVKTKKSARPPGQHGVSRNKSSEYS). Polar residues predominate over residues 44 to 53 (VSRNKSSEYS). The S4 RNA-binding domain occupies 97 to 163 (SRLDNVVYRM…EKSREQLRIK (67 aa)).

This sequence belongs to the universal ribosomal protein uS4 family. Part of the 30S ribosomal subunit. Contacts protein S5. The interaction surface between S4 and S5 is involved in control of translational fidelity.

In terms of biological role, one of the primary rRNA binding proteins, it binds directly to 16S rRNA where it nucleates assembly of the body of the 30S subunit. With S5 and S12 plays an important role in translational accuracy. In Psychrobacter arcticus (strain DSM 17307 / VKM B-2377 / 273-4), this protein is Small ribosomal subunit protein uS4.